A 339-amino-acid polypeptide reads, in one-letter code: NADPH dehydrogenase (339 aa).

Ser-24–Cys-27 lines the FMN pocket. Position 29 (Tyr-29) interacts with substrate. FMN-binding residues include Ala-61 and Gln-103. A substrate-binding site is contributed by His-165–His-168. FMN-binding positions include Arg-216 and Ala-308–Arg-309.

It belongs to the NADH:flavin oxidoreductase/NADH oxidase family. NamA subfamily. In terms of assembly, homotetramer. Requires FMN as cofactor.

The enzyme catalyses A + NADPH + H(+) = AH2 + NADP(+). Functionally, catalyzes the reduction of the double bond of an array of alpha,beta-unsaturated aldehydes and ketones. It also reduces the nitro group of nitroester and nitroaromatic compounds. It could have a role in detoxification processes. The chain is NADPH dehydrogenase from Bacillus licheniformis (strain ATCC 14580 / DSM 13 / JCM 2505 / CCUG 7422 / NBRC 12200 / NCIMB 9375 / NCTC 10341 / NRRL NRS-1264 / Gibson 46).